The sequence spans 349 residues: tRNA pseudouridine synthase D (349 aa).

Substrate is bound at residue Phe-27. Asp-80 (nucleophile) is an active-site residue. Asn-129 contacts substrate. A TRUD domain is found at 155–303 (GVPNYFGAQR…VEAARRAMLL (149 aa)). Position 329 (Phe-329) interacts with substrate.

It belongs to the pseudouridine synthase TruD family.

It catalyses the reaction uridine(13) in tRNA = pseudouridine(13) in tRNA. Its function is as follows. Responsible for synthesis of pseudouridine from uracil-13 in transfer RNAs. This Escherichia fergusonii (strain ATCC 35469 / DSM 13698 / CCUG 18766 / IAM 14443 / JCM 21226 / LMG 7866 / NBRC 102419 / NCTC 12128 / CDC 0568-73) protein is tRNA pseudouridine synthase D.